Here is a 346-residue protein sequence, read N- to C-terminus: Holliday junction branch migration complex subunit RuvB (346 aa).

The large ATPase domain (RuvB-L) stretch occupies residues 1-183; that stretch reads MTEQRIIASS…FGIVQRLEFY (183 aa). ATP contacts are provided by residues Ile-22, Arg-23, Gly-64, Lys-67, Thr-68, Thr-69, 130–132, Arg-173, Tyr-183, and Arg-220; that span reads EDF. Thr-68 provides a ligand contact to Mg(2+). The segment at 184 to 254 is small ATPAse domain (RuvB-S); it reads SPQELTRIVI…VAQAAMQMLK (71 aa). The head domain (RuvB-H) stretch occupies residues 257-346; that stretch reads PEGFDELDRR…PGIGEPGDLF (90 aa). Arg-293, Arg-312, and Arg-317 together coordinate DNA.

This sequence belongs to the RuvB family. As to quaternary structure, homohexamer. Forms an RuvA(8)-RuvB(12)-Holliday junction (HJ) complex. HJ DNA is sandwiched between 2 RuvA tetramers; dsDNA enters through RuvA and exits via RuvB. An RuvB hexamer assembles on each DNA strand where it exits the tetramer. Each RuvB hexamer is contacted by two RuvA subunits (via domain III) on 2 adjacent RuvB subunits; this complex drives branch migration. In the full resolvosome a probable DNA-RuvA(4)-RuvB(12)-RuvC(2) complex forms which resolves the HJ.

The protein localises to the cytoplasm. It catalyses the reaction ATP + H2O = ADP + phosphate + H(+). The RuvA-RuvB-RuvC complex processes Holliday junction (HJ) DNA during genetic recombination and DNA repair, while the RuvA-RuvB complex plays an important role in the rescue of blocked DNA replication forks via replication fork reversal (RFR). RuvA specifically binds to HJ cruciform DNA, conferring on it an open structure. The RuvB hexamer acts as an ATP-dependent pump, pulling dsDNA into and through the RuvAB complex. RuvB forms 2 homohexamers on either side of HJ DNA bound by 1 or 2 RuvA tetramers; 4 subunits per hexamer contact DNA at a time. Coordinated motions by a converter formed by DNA-disengaged RuvB subunits stimulates ATP hydrolysis and nucleotide exchange. Immobilization of the converter enables RuvB to convert the ATP-contained energy into a lever motion, pulling 2 nucleotides of DNA out of the RuvA tetramer per ATP hydrolyzed, thus driving DNA branch migration. The RuvB motors rotate together with the DNA substrate, which together with the progressing nucleotide cycle form the mechanistic basis for DNA recombination by continuous HJ branch migration. Branch migration allows RuvC to scan DNA until it finds its consensus sequence, where it cleaves and resolves cruciform DNA. This chain is Holliday junction branch migration complex subunit RuvB, found in Xanthomonas axonopodis pv. citri (strain 306).